The primary structure comprises 696 residues: DNA topoisomerase 6 subunit B (696 aa).

Positions M1–K36 are disordered. The segment covering A20–K36 has biased composition (low complexity). Residues N88, D187, T208–K209, G217–K224, and K543 contribute to the ATP site.

Belongs to the TOP6B family. In terms of assembly, homodimer. Heterotetramer of two TOP6A and two TOP6B subunits. Interacts with SPO11-2 and TOP6A3. In terms of tissue distribution, highly expressed in flowers before pollination. Expressed in roots and shoots.

It localises to the nucleus. The enzyme catalyses ATP-dependent breakage, passage and rejoining of double-stranded DNA.. Its function is as follows. Component of the DNA topoisomerase VI involved in chromatin organization and progression of endoreduplication cycles. Relaxes both positive and negative superturns and exhibits a strong decatenase activity. The B subunit binds ATP. May be involved in cell proliferation and stress tolerance. The chain is DNA topoisomerase 6 subunit B from Oryza sativa subsp. indica (Rice).